The chain runs to 525 residues: GMP synthase [glutamine-hydrolyzing] (525 aa).

Residues 8–206 (PLLILDFGSQ…VVDICKASTD (199 aa)) enclose the Glutamine amidotransferase type-1 domain. Catalysis depends on cysteine 85, which acts as the Nucleophile. Residues histidine 180 and glutamate 182 contribute to the active site. In terms of domain architecture, GMPS ATP-PPase spans 207 to 400 (WTPEHIIDEA…LGLPHDMVYR (194 aa)). 234-240 (SGGVDSS) contributes to the ATP binding site.

Homodimer.

It catalyses the reaction XMP + L-glutamine + ATP + H2O = GMP + L-glutamate + AMP + diphosphate + 2 H(+). Its pathway is purine metabolism; GMP biosynthesis; GMP from XMP (L-Gln route): step 1/1. Its function is as follows. Catalyzes the synthesis of GMP from XMP. The chain is GMP synthase [glutamine-hydrolyzing] from Legionella pneumophila (strain Lens).